The sequence spans 287 residues: Small ribosomal subunit biogenesis GTPase RsgA (287 aa).

The CP-type G domain occupies 63 to 223; the sequence is KNLLIRPKVA…VIDTPGFGSL (161 aa). GTP contacts are provided by residues 113-116 and 166-174; these read SKMD and GQSGVGKST. Residues Cys-246, Cys-251, His-253, and Cys-259 each contribute to the Zn(2+) site.

The protein belongs to the TRAFAC class YlqF/YawG GTPase family. RsgA subfamily. Monomer. Associates with 30S ribosomal subunit, binds 16S rRNA. The cofactor is Zn(2+).

Its subcellular location is the cytoplasm. Functionally, one of several proteins that assist in the late maturation steps of the functional core of the 30S ribosomal subunit. Helps release RbfA from mature subunits. May play a role in the assembly of ribosomal proteins into the subunit. Circularly permuted GTPase that catalyzes slow GTP hydrolysis, GTPase activity is stimulated by the 30S ribosomal subunit. The sequence is that of Small ribosomal subunit biogenesis GTPase RsgA from Malacoplasma penetrans (strain HF-2) (Mycoplasma penetrans).